The chain runs to 804 residues: Exo-1,4-beta-xylosidase xlnD (804 aa).

A signal peptide spans 1–26 (MAHSMSRPVAATAAALLALALPQALA). Residues Asn-29, Asn-124, Asn-148, Asn-242, and Asn-251 are each glycosylated (N-linked (GlcNAc...) asparagine). Residue Asp-315 is part of the active site. N-linked (GlcNAc...) asparagine glycosylation is found at Asn-357, Asn-390, Asn-413, Asn-444, Asn-455, Asn-573, Asn-665, Asn-696, and Asn-718.

This sequence belongs to the glycosyl hydrolase 3 family.

It localises to the secreted. It catalyses the reaction Hydrolysis of (1-&gt;4)-beta-D-xylans, to remove successive D-xylose residues from the non-reducing termini.. The protein operates within glycan degradation; xylan degradation. In terms of biological role, xylan 1,4-beta-xylosidase involved in the hydrolysis of xylan, a major structural heterogeneous polysaccharide found in plant biomass representing the second most abundant polysaccharide in the biosphere, after cellulose. The chain is Exo-1,4-beta-xylosidase xlnD (xlnD) from Aspergillus awamori (Black koji mold).